Here is a 707-residue protein sequence, read N- to C-terminus: MAGVSFSGHRLELLAAYEEVIREESAADWALYTYEDGSDDLKLAASGEGGLQELSGHFENQKVMYGFCSVKDSQAALPKYVLINWVGEDVPDARKCACASHVAKVAEFFQGVDVIVNASSVEDIDAGAIGQRLSNGLARLSSPVLHRLRLREDENAEPVGTTYQKTDAAVEMKRINREQFWEQAKKEEELRKEEERKKALDARLRFEQERMEQERQEQEERERRYREREQQIEEHRRKQQSLEAEEAKRRLKDQSIFGDQRDEEEESQMKKSESEVEEAAAIIAQRPDNPREFFRQQERVASASGGSCDAPSPFNHRPGRPYCPFIKASDSGPSSSSSSSSSPPRTPFPYITCHRTPNLSSSLPCSHLDSHRRMAPTPIPTRSPSDSSTASTPITEQIERALDEVTSSQPPPPPPPPPPAQEAQESAPRLDGEEVCKEAKVAAAPQVWAGCAEEPPRAQEPPLLQSSPTEDLMCTESPEQAVLAASPEPDASVTSVADAHAADTIETTTATTATTIADNVTPAAASLIDLWPGNGEEASTPQAEPRVPTPPSGAEASLAEVPLLNEAAQEPLPPVGEGCANLLNFDELPEPPATFCDPEEEAEGEPLAASQVLTMPSALEEVDQVLEQELEPEPHLLTNGETTQKEGTQQASEGYFSQSQEEEFAQSEEPCAKAPPPVFYNKPPEIDITCWDADPVPEEEEGFEGGD.

The residue at position 2 (Ala2) is an N-acetylalanine. The region spanning 3–134 (GVSFSGHRLE…DAGAIGQRLS (132 aa)) is the ADF-H domain. 2 positions are modified to phosphoserine: Ser141 and Ser142. The segment covering 209-236 (ERMEQERQEQEERERRYREREQQIEEHR) has biased composition (basic and acidic residues). Disordered regions lie at residues 209-438 (ERME…VCKE), 452-497 (AEEP…TSVA), 531-557 (WPGN…AEAS), 582-609 (LLNF…PLAA), and 630-707 (LEPE…EGGD). Position 241 is a phosphoserine (Ser241). Residues 288–298 (DNPREFFRQQE) show a composition bias toward basic and acidic residues. The segment covering 329–343 (SDSGPSSSSSSSSSP) has biased composition (low complexity). The residue at position 342 (Ser342) is a Phosphoserine. Polar residues predominate over residues 355–364 (RTPNLSSSLP). Residues Thr377 and Thr381 each carry the phosphothreonine modification. Polar residues predominate over residues 380-395 (PTRSPSDSSTASTPIT). A phosphoserine mark is found at Ser383, Ser385, and Ser391. Thr392 bears the Phosphothreonine mark. A compositionally biased stretch (pro residues) spans 409–420 (QPPPPPPPPPPA). The span at 428–438 (PRLDGEEVCKE) shows a compositional bias: basic and acidic residues. Ser467 is subject to Phosphoserine. Position 549 is a phosphothreonine (Thr549). Residues 639–652 (NGETTQKEGTQQAS) are compositionally biased toward polar residues. Ser659 carries the phosphoserine modification. Residues 695 to 707 (PVPEEEEGFEGGD) are compositionally biased toward acidic residues.

As to quaternary structure, interacts with RUFY. Interacts with CXCR4; this interaction is enhanced by antigenic stimulation. Interacts (via ADF-H domain) with ZMYND8 (via N-terminus); the interaction leads to sequestering of ZMYND8 in the cytoplasm. Post-translationally, ISGylated. In terms of tissue distribution, brain neurons.

Its subcellular location is the cytoplasm. It is found in the cell projection. It localises to the dendrite. The protein localises to the cell cortex. The protein resides in the cell junction. Its subcellular location is the growth cone. In terms of biological role, actin cytoskeleton-organizing protein that plays a role in the formation of cell projections. Required for actin polymerization at immunological synapses (IS) and for the recruitment of the chemokine receptor CXCR4 to IS. Plays a role in dendritic spine morphogenesis and organization, including the localization of the dopamine receptor DRD1 to the dendritic spines. Involved in memory-related synaptic plasticity in the hippocampus. In Rattus norvegicus (Rat), this protein is Drebrin (Dbn1).